Reading from the N-terminus, the 63-residue chain is Venom peptide U-reduvitoxin-Pp19 (63 aa).

The first 23 residues, M1–G23, serve as a signal peptide directing secretion. Disulfide bonds link C15–C62, C25–C53, and C30–C61.

In terms of tissue distribution, hemolymph (at protein level). Also weakly expressed by the venom gland (at protein level).

The protein localises to the secreted. Its function is as follows. Toxin with insecticidal activity. High doses of recombinant toxin causes impaired motor behavior of D.melanogaster, which progress slowly to paralysis and death after several hours. This chain is Venom peptide U-reduvitoxin-Pp19, found in Pristhesancus plagipennis (Common assassin bug).